We begin with the raw amino-acid sequence, 126 residues long: MYNAKTKKKRKNITLGIVYIKSTFNNTIVTFTDMQGNAIAALSAGAIGFKGAKKATPYAAQVIVEKVSEVAKEHGIKTLSIRIQGAGSQRESALRAIFNQNFIVTSITDTSPVAHNGCRPPKKRRV.

The protein belongs to the universal ribosomal protein uS11 family. As to quaternary structure, part of the 30S ribosomal subunit. Interacts with proteins S7 and S18. Binds to IF-3.

Located on the platform of the 30S subunit, it bridges several disparate RNA helices of the 16S rRNA. Forms part of the Shine-Dalgarno cleft in the 70S ribosome. The sequence is that of Small ribosomal subunit protein uS11 from Orientia tsutsugamushi (strain Boryong) (Rickettsia tsutsugamushi).